The primary structure comprises 463 residues: Asparagine--tRNA ligase (463 aa).

Belongs to the class-II aminoacyl-tRNA synthetase family. In terms of assembly, homodimer.

The protein localises to the cytoplasm. The catalysed reaction is tRNA(Asn) + L-asparagine + ATP = L-asparaginyl-tRNA(Asn) + AMP + diphosphate + H(+). The sequence is that of Asparagine--tRNA ligase from Clostridium botulinum (strain ATCC 19397 / Type A).